The primary structure comprises 287 residues: ADP-dependent (S)-NAD(P)H-hydrate dehydratase (287 aa).

A YjeF C-terminal domain is found at 7–283 (TTALVKKFIP…PEISTVMKPF (277 aa)). (6S)-NADPHX contacts are provided by A42 and H159. Residues 196 to 200 (KGSTD) and G224 contribute to the AMP site. Residue D225 coordinates (6S)-NADPHX.

The protein belongs to the NnrD/CARKD family. As to quaternary structure, homotetramer. Mg(2+) serves as cofactor.

The enzyme catalyses (6S)-NADHX + ADP = AMP + phosphate + NADH + H(+). The catalysed reaction is (6S)-NADPHX + ADP = AMP + phosphate + NADPH + H(+). Its function is as follows. Catalyzes the dehydration of the S-form of NAD(P)HX at the expense of ADP, which is converted to AMP. Together with NAD(P)HX epimerase, which catalyzes the epimerization of the S- and R-forms, the enzyme allows the repair of both epimers of NAD(P)HX, a damaged form of NAD(P)H that is a result of enzymatic or heat-dependent hydration. The protein is ADP-dependent (S)-NAD(P)H-hydrate dehydratase of Nitrosopumilus maritimus (strain SCM1).